A 485-amino-acid polypeptide reads, in one-letter code: Glutamyl-tRNA(Gln) amidotransferase subunit A (485 aa).

Active-site charge relay system residues include Lys78 and Ser153. The Acyl-ester intermediate role is filled by Ser177.

Belongs to the amidase family. GatA subfamily. Heterotrimer of A, B and C subunits.

It carries out the reaction L-glutamyl-tRNA(Gln) + L-glutamine + ATP + H2O = L-glutaminyl-tRNA(Gln) + L-glutamate + ADP + phosphate + H(+). Functionally, allows the formation of correctly charged Gln-tRNA(Gln) through the transamidation of misacylated Glu-tRNA(Gln) in organisms which lack glutaminyl-tRNA synthetase. The reaction takes place in the presence of glutamine and ATP through an activated gamma-phospho-Glu-tRNA(Gln). This chain is Glutamyl-tRNA(Gln) amidotransferase subunit A, found in Geobacter metallireducens (strain ATCC 53774 / DSM 7210 / GS-15).